The sequence spans 621 residues: Archaeal Lon protease (621 aa).

Residues 1–117 (MNEEVREILG…YKEEAMKKAQ (117 aa)) are Cytoplasmic-facing. 54–61 (GSPGTGKS) lines the ATP pocket. A helical membrane pass occupies residues 118 to 136 (ARNFLIFTLVFLVIGYTVL). Residues 137–141 (TNPGN) are Extracellular-facing. The helical transmembrane segment at 142-160 (LIWGIIAAVLILMMSRYFI) threads the bilayer. At 161 to 621 (PREDRNVPKL…KFKELELAAV (461 aa)) the chain is on the cytoplasmic side. Positions 423-602 (GYEVGRVNGL…NEVLEHVLED (180 aa)) constitute a Lon proteolytic domain. Catalysis depends on residues S509 and K552.

The protein belongs to the peptidase S16 family. Archaeal LonB subfamily. As to quaternary structure, homohexamer. Organized in a ring with a central cavity.

The protein localises to the cell membrane. In terms of biological role, ATP-dependent serine protease that mediates the selective degradation of mutant and abnormal proteins as well as certain short-lived regulatory proteins. Degrades polypeptides processively. The sequence is that of Archaeal Lon protease from Archaeoglobus fulgidus (strain ATCC 49558 / DSM 4304 / JCM 9628 / NBRC 100126 / VC-16).